The chain runs to 89 residues: Small ribosomal subunit protein uS14 (89 aa).

This sequence belongs to the universal ribosomal protein uS14 family. In terms of assembly, part of the 30S ribosomal subunit. Contacts proteins S3 and S10.

Binds 16S rRNA, required for the assembly of 30S particles and may also be responsible for determining the conformation of the 16S rRNA at the A site. In Chlorobium limicola (strain DSM 245 / NBRC 103803 / 6330), this protein is Small ribosomal subunit protein uS14.